The chain runs to 105 residues: Vacuolar ATPase assembly integral membrane protein VMA21 homolog (105 aa).

The disordered stretch occupies residues 1–26; that stretch reads MSTKNKKAAGGNGGAPKQTRQQSHDS. The Cytoplasmic portion of the chain corresponds to 1–36; that stretch reads MSTKNKKAAGGNGGAPKQTRQQSHDSQDYSSFKTVL. A helical transmembrane segment spans residues 37–57; sequence FYCMLIVFLPVLTFFVLKGFV. Residues 58–68 are Lumenal-facing; it reads LDQFLDISEVK. A helical transmembrane segment spans residues 69–89; the sequence is VNIASAVGAVVALHIALGLYI. Over 90-105 the chain is Cytoplasmic; that stretch reads YRAYFGTTGSKASKTD.

Belongs to the VMA21 family.

Its subcellular location is the endoplasmic reticulum membrane. It is found in the endoplasmic reticulum-Golgi intermediate compartment membrane. The protein resides in the cytoplasmic vesicle. It localises to the COPII-coated vesicle membrane. Functionally, required for the assembly of the V0 complex of the vacuolar ATPase (V-ATPase) in the endoplasmic reticulum. The protein is Vacuolar ATPase assembly integral membrane protein VMA21 homolog of Drosophila erecta (Fruit fly).